The following is a 426-amino-acid chain: Enolase (426 aa).

Position 162 (Gln-162) interacts with (2R)-2-phosphoglycerate. Glu-204 serves as the catalytic Proton donor. Asp-241, Glu-284, and Asp-311 together coordinate Mg(2+). The (2R)-2-phosphoglycerate site is built by Lys-336, Arg-365, Ser-366, and Lys-387. Lys-336 acts as the Proton acceptor in catalysis.

This sequence belongs to the enolase family. Mg(2+) is required as a cofactor.

The protein resides in the cytoplasm. The protein localises to the secreted. It is found in the cell surface. It carries out the reaction (2R)-2-phosphoglycerate = phosphoenolpyruvate + H2O. It functions in the pathway carbohydrate degradation; glycolysis; pyruvate from D-glyceraldehyde 3-phosphate: step 4/5. Its function is as follows. Catalyzes the reversible conversion of 2-phosphoglycerate (2-PG) into phosphoenolpyruvate (PEP). It is essential for the degradation of carbohydrates via glycolysis. The chain is Enolase from Acidithiobacillus ferrooxidans (strain ATCC 23270 / DSM 14882 / CIP 104768 / NCIMB 8455) (Ferrobacillus ferrooxidans (strain ATCC 23270)).